A 1093-amino-acid polypeptide reads, in one-letter code: Fused isobutyryl-CoA mutase (1093 aa).

Residues 1-20 (MTDLSDVSRTAAAKPPAVPG) form a disordered region. In terms of domain architecture, B12-binding spans 26-156 (KVRFVTAASL…AGMITDMAQR (131 aa)). Adenosylcob(III)alamin is bound at residue His39. The segment at 169 to 417 (LDTVVAGDRR…YQGLVGALGA (249 aa)) is GTPase chaperone MeaI. 219–224 (GAGKSS) serves as a coordination point for GTP. Mg(2+) contacts are provided by Ser223, Ile248, Asp249, and Asp262. Arg265 contributes to the GTP binding site. The Mg(2+) site is built by Glu310 and Thr311. 357–360 (NKFD) is a binding site for GTP. A linker region spans residues 418–579 (RGMSLKPGTL…MRENVPGSFP (162 aa)). Substrate is bound by residues Phe587, Arg622, Arg728, Tyr772, Ser821, Arg856, and Lys861. GTP is bound by residues Glu973 and Asn1092.

The protein belongs to the IcmF family. As to quaternary structure, homodimer. Requires adenosylcob(III)alamin as cofactor. Mg(2+) is required as a cofactor.

The enzyme catalyses 2-methylpropanoyl-CoA = butanoyl-CoA. The catalysed reaction is 3-methylbutanoyl-CoA = 2,2-dimethylpropanoyl-CoA. It carries out the reaction GTP + H2O = GDP + phosphate + H(+). With respect to regulation, is prone to inactivation during catalytic turnover due to the occasional loss of the 5'-deoxyadenosine moiety and formation of the inactive cob(II)alamin cofactor in its active site. The GTPase activity of IcmF powers the ejection of the inactive cofactor and requires the presence of an acceptor protein, adenosyltransferase (ATR), for receiving it. ATR, in turn, catalyzes an adenosylation reaction converting cob(II)alamin in the presence of ATP and a reductant to the active AdoCbl cofactor. The repaired cofactor is then reloaded onto IcmF in a GTPase-gated step, regenerating active enzyme. The GTPase activity of IcmF is significantly decreased in the presence of excess of AdoCbl or cob(II)alamin and is higher in the apoenzyme state, indicating that the G-domain senses the presence and identity of the cofactor in the mutase active site. In terms of biological role, catalyzes the reversible interconversion of isobutyryl-CoA and n-butyryl-CoA, and to a much lesser extent, of pivalyl-CoA and isovaleryl-CoA, using radical chemistry. Also exhibits GTPase activity, associated with its G-protein domain (MeaI) that functions as a chaperone that assists cofactor delivery and proper holo-enzyme assembly. The G-domain of IcmF also has a role in its cofactor repair. Does not display ATPase activity. This is Fused isobutyryl-CoA mutase from Cupriavidus metallidurans (strain ATCC 43123 / DSM 2839 / NBRC 102507 / CH34) (Ralstonia metallidurans).